We begin with the raw amino-acid sequence, 94 residues long: PTS system galactitol-specific EIIB component (94 aa).

In terms of domain architecture, PTS EIIB type-2 spans 1–94 (MKRKIIVACG…QNKILTILQG (94 aa)). Cys-9 serves as the catalytic Phosphocysteine intermediate; for EIIB activity. Cys-9 carries the phosphocysteine; by EIIA modification.

As to quaternary structure, forms a complex with one each of subunit of GatA, GatB and 2 subunits of GatC.

Its subcellular location is the cytoplasm. It carries out the reaction galactitol(out) + N(pros)-phospho-L-histidyl-[protein] = galactitol 1-phosphate(in) + L-histidyl-[protein]. The phosphoenolpyruvate-dependent sugar phosphotransferase system (PTS), a major carbohydrate active transport system, catalyzes the phosphorylation of incoming sugar substrates concomitant with their translocation across the cell membrane. The enzyme II complex composed of GatA, GatB and GatC is involved in galactitol transport. It can also use D-glucitol. In Escherichia coli (strain K12), this protein is PTS system galactitol-specific EIIB component.